We begin with the raw amino-acid sequence, 379 residues long: S-(hydroxymethyl)glutathione dehydrogenase (379 aa).

C47 contacts Zn(2+). An NAD(+)-binding site is contributed by H48. Residues H69, E70, C99, C102, C105, C113, and C176 each coordinate Zn(2+). Residues 201-206, D225, and 296-298 each bind NAD(+); these read GAGCIG and IGV.

The protein belongs to the zinc-containing alcohol dehydrogenase family. Class-III subfamily. Requires Zn(2+) as cofactor.

It catalyses the reaction a primary alcohol + NAD(+) = an aldehyde + NADH + H(+). The enzyme catalyses a secondary alcohol + NAD(+) = a ketone + NADH + H(+). The catalysed reaction is S-(hydroxymethyl)glutathione + NADP(+) = S-formylglutathione + NADPH + H(+). It carries out the reaction S-(hydroxymethyl)glutathione + NAD(+) = S-formylglutathione + NADH + H(+). It catalyses the reaction S-nitrosoglutathione + NADH + H(+) = S-(hydroxysulfenamide)glutathione + NAD(+). Oxidizes long-chain alcohols and, in the presence of glutathione, is able to oxidize formaldehyde. Also acts as a S-nitroso-glutathione reductase by catalyzing the NADH-dependent reduction of S-nitrosoglutathione, thereby regulating protein S-nitrosylation. This Komagataella pastoris (Yeast) protein is S-(hydroxymethyl)glutathione dehydrogenase (FLD1).